The chain runs to 258 residues: Imidazole glycerol phosphate synthase subunit HisF (258 aa).

Residues D11 and D130 contribute to the active site.

The protein belongs to the HisA/HisF family. In terms of assembly, heterodimer of HisH and HisF.

The protein localises to the cytoplasm. The enzyme catalyses 5-[(5-phospho-1-deoxy-D-ribulos-1-ylimino)methylamino]-1-(5-phospho-beta-D-ribosyl)imidazole-4-carboxamide + L-glutamine = D-erythro-1-(imidazol-4-yl)glycerol 3-phosphate + 5-amino-1-(5-phospho-beta-D-ribosyl)imidazole-4-carboxamide + L-glutamate + H(+). It functions in the pathway amino-acid biosynthesis; L-histidine biosynthesis; L-histidine from 5-phospho-alpha-D-ribose 1-diphosphate: step 5/9. In terms of biological role, IGPS catalyzes the conversion of PRFAR and glutamine to IGP, AICAR and glutamate. The HisF subunit catalyzes the cyclization activity that produces IGP and AICAR from PRFAR using the ammonia provided by the HisH subunit. The polypeptide is Imidazole glycerol phosphate synthase subunit HisF (Rhodopseudomonas palustris (strain BisB18)).